Consider the following 188-residue polypeptide: Elongation factor P (188 aa).

It belongs to the elongation factor P family.

It localises to the cytoplasm. The protein operates within protein biosynthesis; polypeptide chain elongation. Functionally, involved in peptide bond synthesis. Stimulates efficient translation and peptide-bond synthesis on native or reconstituted 70S ribosomes in vitro. Probably functions indirectly by altering the affinity of the ribosome for aminoacyl-tRNA, thus increasing their reactivity as acceptors for peptidyl transferase. This Ureaplasma parvum serovar 3 (strain ATCC 700970) protein is Elongation factor P (efp).